An 852-amino-acid chain; its full sequence is Replication factor C small subunit (852 aa).

The DOD-type homing endonuclease domain occupies 183–306 (WLGYFMGSGY…IAYALASFGI (124 aa)).

This sequence belongs to the activator 1 small subunits family. RfcS subfamily. Heteromultimer composed of three to four small subunits (RfcS) and one to two large subunits (RfcL). This protein undergoes a protein self splicing that involves a post-translational excision of the intervening region (intein) followed by peptide ligation.

Functionally, part of the RFC clamp loader complex which loads the PCNA sliding clamp onto DNA. The complex possesses DNA-dependent ATPase activity which is further stimulated by PCNA. The sequence is that of Replication factor C small subunit (rfcS) from Pyrococcus furiosus (strain ATCC 43587 / DSM 3638 / JCM 8422 / Vc1).